The primary structure comprises 407 residues: Probable tRNA sulfurtransferase (407 aa).

The region spanning 61 to 165 is the THUMP domain; that stretch reads NEITNRLSKI…LDAIYMYEEV (105 aa). Residues 183–184, 208–209, R265, G287, and Q296 contribute to the ATP site; these read ML and HF.

It belongs to the ThiI family.

It is found in the cytoplasm. It catalyses the reaction [ThiI sulfur-carrier protein]-S-sulfanyl-L-cysteine + a uridine in tRNA + 2 reduced [2Fe-2S]-[ferredoxin] + ATP + H(+) = [ThiI sulfur-carrier protein]-L-cysteine + a 4-thiouridine in tRNA + 2 oxidized [2Fe-2S]-[ferredoxin] + AMP + diphosphate. The catalysed reaction is [ThiS sulfur-carrier protein]-C-terminal Gly-Gly-AMP + S-sulfanyl-L-cysteinyl-[cysteine desulfurase] + AH2 = [ThiS sulfur-carrier protein]-C-terminal-Gly-aminoethanethioate + L-cysteinyl-[cysteine desulfurase] + A + AMP + 2 H(+). It functions in the pathway cofactor biosynthesis; thiamine diphosphate biosynthesis. In terms of biological role, catalyzes the ATP-dependent transfer of a sulfur to tRNA to produce 4-thiouridine in position 8 of tRNAs, which functions as a near-UV photosensor. Also catalyzes the transfer of sulfur to the sulfur carrier protein ThiS, forming ThiS-thiocarboxylate. This is a step in the synthesis of thiazole, in the thiamine biosynthesis pathway. The sulfur is donated as persulfide by IscS. The protein is Probable tRNA sulfurtransferase of Staphylococcus aureus (strain MRSA252).